A 247-amino-acid chain; its full sequence is Elongation factor Ts (247 aa).

The involved in Mg(2+) ion dislocation from EF-Tu stretch occupies residues 82–85 (TDFV).

The protein belongs to the EF-Ts family.

It localises to the cytoplasm. Functionally, associates with the EF-Tu.GDP complex and induces the exchange of GDP to GTP. It remains bound to the aminoacyl-tRNA.EF-Tu.GTP complex up to the GTP hydrolysis stage on the ribosome. The sequence is that of Elongation factor Ts (tsf) from Arthrospira platensis (Spirulina platensis).